The following is a 653-amino-acid chain: Potassium voltage-gated channel subfamily A member 4 (653 aa).

The Cytoplasmic portion of the chain corresponds to 1–304; the sequence is MEVAMVSAES…LLFEYPESSS (304 aa). The interval 24-148 is disordered; sequence QARARERERL…RFYYSEDDHG (125 aa). Residues 36–52 show a composition bias toward low complexity; that stretch reads SRAAAAAAVAAATAAVE. Residues 81–97 show a composition bias toward basic residues; sequence GSRRRRRQRSEKKKAHY. Phosphoserine; by PKA is present on serine 90. Residue serine 122 is modified to Phosphoserine. Over residues 122 to 137 the composition is skewed to acidic residues; sequence SEEEEDEEEEEEEEEE. Residues 305–326 form a helical membrane-spanning segment; that stretch reads PARGIAIVSVLVILISIVIFCL. Residues 327–370 are Extracellular-facing; that stretch reads ETLPEFRDDRDLVMALSAGGHGGLLNDTSAPHLENSGHTIFNDP. An N-linked (GlcNAc...) asparagine glycan is attached at asparagine 352. A helical membrane pass occupies residues 371-392; that stretch reads FFIVETVCIVWFSFEFVVRCFA. At 393 to 403 the chain is on the cytoplasmic side; that stretch reads CPSQALFFKNI. A helical membrane pass occupies residues 404 to 424; the sequence is MNIIDIVSILPYFITLGTDLA. Residues 425–439 are Extracellular-facing; sequence QQQGGGNGQQQQAMS. A helical; Voltage-sensor transmembrane segment spans residues 440 to 460; the sequence is FAILRIIRLVRVFRIFKLSRH. The Cytoplasmic portion of the chain corresponds to 461–475; sequence SKGLQILGHTLRASM. An S4-S5 linker region spans residues 462–475; sequence KGLQILGHTLRASM. Residues 476 to 497 form a helical membrane-spanning segment; that stretch reads RELGLLIFFLFIGVILFSSAVY. Topologically, residues 498-511 are extracellular; it reads FAEADEPTTHFQSI. The helical intramembrane region spans 512–523; that stretch reads PDAFWWAVVTMT. The Selectivity filter signature appears at 524–529; that stretch reads TVGYGD. An intramembrane segment occupies 524–531; that stretch reads TVGYGDMK. The Extracellular portion of the chain corresponds to 532–538; that stretch reads PITVGGK. A helical membrane pass occupies residues 539-567; it reads IVGSLCAIAGVLTIALPVPVIVSNFNYFY. The Cytoplasmic segment spans residues 568-653; sequence HRETENEEQT…SNAKAVETDV (86 aa). Serine 599 bears the Phosphoserine; by PKA mark. Basic and acidic residues predominate over residues 629–640; that stretch reads CQGKGDDSETDK. The tract at residues 629–653 is disordered; sequence CQGKGDDSETDKNNCSNAKAVETDV. Positions 651 to 653 match the PDZ-binding motif; sequence TDV.

It belongs to the potassium channel family. A (Shaker) (TC 1.A.1.2) subfamily. Kv1.4/KCNA4 sub-subfamily. In terms of assembly, homotetramer and heterotetramer of potassium channel proteins. Interacts with KCNAB1 and KCNAB2. Interacts with DLG1, DLG2 and DLG4 via their PDZ domains. Interacts with SIGMAR1. Detected in a complex with KCNA1. Interacts with KCNA2. Part of a complex containing KCNA1, KCNAB1 and LGI1. Interacts (via cytoplasmic N-terminal domain) with KCNRG. Expressed in brain, and at lower levels in the testis, lung, kidney, colon and heart. Detected in heart ventricle.

The protein localises to the cell membrane. Its subcellular location is the cell projection. The protein resides in the axon. The catalysed reaction is K(+)(in) = K(+)(out). With respect to regulation, inhibited by 4-aminopyridine (4-AP), but not by tetraethylammonium (TEA) and charybdotoxin (CTX). In terms of biological role, voltage-gated potassium channel that mediates transmembrane potassium transport in excitable membranes. Forms tetrameric potassium-selective channels through which potassium ions pass in accordance with their electrochemical gradient. The channel alternates between opened and closed conformations in response to the voltage difference across the membrane. Can form functional homotetrameric channels and heterotetrameric channels that contain variable proportions of KCNA1, KCNA2, KCNA4, KCNA5, and possibly other family members as well; channel properties depend on the type of alpha subunits that are part of the channel. Channel properties are modulated by cytoplasmic beta subunits that regulate the subcellular location of the alpha subunits and promote rapid inactivation. In vivo, membranes probably contain a mixture of heteromeric potassium channel complexes, making it difficult to assign currents observed in intact tissues to any particular potassium channel family member. Homotetrameric KCNA4 forms a potassium channel that opens in response to membrane depolarization, followed by rapid spontaneous channel closure. Likewise, a heterotetrameric channel formed by KCNA1 and KCNA4 shows rapid inactivation. In Homo sapiens (Human), this protein is Potassium voltage-gated channel subfamily A member 4 (KCNA4).